Consider the following 396-residue polypeptide: Activity-regulated cytoskeleton-associated protein (396 aa).

Residues 54–78 (SKQVERELKGLHRSVGKLENNLDGY) are a coiled coil. The tract at residues 89–100 (KSIKACLCRCQE) is interaction with SH3GL1 or SH3GL3. The tract at residues 195 to 214 (QSWVPGEDGQPSPGVDTQIF) is interaction with DNM2. Position 260 is a phosphoserine (S260). Glycyl lysine isopeptide (Lys-Gly) (interchain with G-Cter in ubiquitin) cross-links involve residues K268 and K269. At T278 the chain carries Phosphothreonine. The interval 358–396 (GLEQAAEPSVTPLPTEDETEALTPALTSESVASDRTQPE) is disordered. Polar residues predominate over residues 382 to 396 (ALTSESVASDRTQPE).

This sequence belongs to the ARC/ARG3.1 family. As to quaternary structure, homooligomer; homooligomerizes into virion-like capsids. Interacts with SH3GL1/endophilin-2, SH3GL3/endophilin-3 and DNM2/DYN2. Interacts with CAMK2B (in the kinase inactive state); leading to target ARC to inactive synapses. Interacts with PSEN1. Interacts with GRIN2A and GRIN2B; inhibiting homooligomerization. In terms of processing, palmitoylation anchors the protein into the membrane by allowing direct insertion into the hydrophobic core of the lipid bilayer. Ubiquitinated by UBE3A, leading to its degradation by the proteasome, thereby promoting AMPA receptors (AMPARs) expression at synapses. Ubiquitinated by RNF216 at Lys-268 and Lys-269 limiting ARC protein levels induced by synaptic activity and thus regulating ARC-dependent forms of synaptic plasticity. Post-translationally, phosphorylation at Ser-260 by CaMK2 prevents homooligomerization into virion-like capsids by disrupting an interaction surface essential for high-order oligomerization. Phosphorylation by CaMK2 inhibits synaptic activity. In terms of tissue distribution, expressed exclusively in certain parts of the brain including cortex and molecular layer of the hippocampus. Typically expressed at high level in a minority of neurons. Basal expression higher in cortex than in hippocampus, highest in visual cortex.

The protein localises to the extracellular vesicle membrane. It is found in the postsynaptic cell membrane. Its subcellular location is the synapse. The protein resides in the postsynaptic density. It localises to the early endosome membrane. The protein localises to the cell projection. It is found in the dendrite. Its subcellular location is the cytoplasm. The protein resides in the cytoskeleton. It localises to the cell cortex. The protein localises to the dendritic spine. It is found in the cytoplasmic vesicle. Its subcellular location is the secretory vesicle. The protein resides in the acrosome. It localises to the clathrin-coated vesicle membrane. Master regulator of synaptic plasticity that self-assembles into virion-like capsids that encapsulate RNAs and mediate intercellular RNA transfer in the nervous system. ARC protein is released from neurons in extracellular vesicles that mediate the transfer of ARC mRNA into new target cells, where ARC mRNA can undergo activity-dependent translation. ARC capsids are endocytosed and are able to transfer ARC mRNA into the cytoplasm of neurons. Acts as a key regulator of synaptic plasticity: required for protein synthesis-dependent forms of long-term potentiation (LTP) and depression (LTD) and for the formation of long-term memory. Regulates synaptic plasticity by promoting endocytosis of AMPA receptors (AMPARs) in response to synaptic activity: this endocytic pathway maintains levels of surface AMPARs in response to chronic changes in neuronal activity through synaptic scaling, thereby contributing to neuronal homeostasis. Acts as a postsynaptic mediator of activity-dependent synapse elimination in the developing cerebellum by mediating elimination of surplus climbing fiber synapses. Accumulates at weaker synapses, probably to prevent their undesired enhancement. This suggests that ARC-containing virion-like capsids may be required to eliminate synaptic material. Required to transduce experience into long-lasting changes in visual cortex plasticity and for long-term memory. Involved in postsynaptic trafficking and processing of amyloid-beta A4 (APP) via interaction with PSEN1. In addition to its role in synapses, also involved in the regulation of the immune system: specifically expressed in skin-migratory dendritic cells and regulates fast dendritic cell migration, thereby regulating T-cell activation. The polypeptide is Activity-regulated cytoskeleton-associated protein (Rattus norvegicus (Rat)).